A 22-amino-acid chain; its full sequence is Odorant-binding protein 1 (22 aa).

It belongs to the calycin superfamily. Lipocalin family. In terms of assembly, homodimer. Post-translationally, the N-terminus is blocked.

Its function is as follows. Binds the chemical odorant, 2-isobutyl-3-methoxypyrazine. The sequence is that of Odorant-binding protein 1 from Oryctolagus cuniculus (Rabbit).